The chain runs to 595 residues: Acriflavine sensitivity control protein acr-2 (595 aa).

Positions 22 to 49 (CYNCHRKRLRCDKSLPACLKCSINGEEC) form a DNA-binding region, zn(2)-C6 fungal-type. Over residues 69 to 88 (TTRTTNKTNFNGTNTTTPRT) the composition is skewed to low complexity. The disordered stretch occupies residues 69–172 (TTRTTNKTNF…PDDNPDPSSQ (104 aa)). The span at 89 to 117 (VKSSTPTQAPTPSDSPRQLDTDVTSSSAP) shows a compositional bias: polar residues. Over residues 118-138 (SHTCSRSTTTSTTTTRISSPT) the composition is skewed to low complexity.

The protein resides in the nucleus. Functionally, probable transcriptional regulator. In Neurospora crassa (strain ATCC 24698 / 74-OR23-1A / CBS 708.71 / DSM 1257 / FGSC 987), this protein is Acriflavine sensitivity control protein acr-2 (acr-2).